The sequence spans 451 residues: Adenylyltransferase and sulfurtransferase MOCS3-1 (451 aa).

Residues 42 to 62 (GEDSDEAEESSNDMPTPQTKL) are disordered. Residues 43–52 (EDSDEAEESS) show a composition bias toward acidic residues. Residue T60 is modified to Phosphothreonine. ATP is bound by residues G99, D120, 127–131 (SNLHR), K144, and 188–189 (DN). The Zn(2+) site is built by C229 and C232. The Glycyl thioester intermediate; for adenylyltransferase activity role is filled by C246. Positions 304 and 307 each coordinate Zn(2+). Positions 353–449 (QSQPHLLLDV…WTGSVDATFP (97 aa)) constitute a Rhodanese domain. Catalysis depends on C408, which acts as the Cysteine persulfide intermediate; for sulfurtransferase activity.

The protein in the N-terminal section; belongs to the HesA/MoeB/ThiF family. UBA4 subfamily. It depends on Zn(2+) as a cofactor.

Its subcellular location is the cytoplasm. It catalyses the reaction [molybdopterin-synthase sulfur-carrier protein]-C-terminal Gly-Gly + ATP + H(+) = [molybdopterin-synthase sulfur-carrier protein]-C-terminal Gly-Gly-AMP + diphosphate. It carries out the reaction [molybdopterin-synthase sulfur-carrier protein]-C-terminal Gly-Gly-AMP + S-sulfanyl-L-cysteinyl-[cysteine desulfurase] + AH2 = [molybdopterin-synthase sulfur-carrier protein]-C-terminal-Gly-aminoethanethioate + L-cysteinyl-[cysteine desulfurase] + A + AMP + 2 H(+). The protein operates within tRNA modification; 5-methoxycarbonylmethyl-2-thiouridine-tRNA biosynthesis. It functions in the pathway cofactor biosynthesis; molybdopterin biosynthesis. In terms of biological role, plays a central role in 2-thiolation of mcm(5)S(2)U at tRNA wobble positions of cytosolic tRNA(Lys), tRNA(Glu) and tRNA(Gln). Also essential during biosynthesis of the molybdenum cofactor. Acts by mediating the C-terminal thiocarboxylation of sulfur carriers URM1 and MOCS2A. Its N-terminus first activates URM1 and MOCS2A as acyl-adenylates (-COAMP), then the persulfide sulfur on the catalytic cysteine is transferred to URM1 and MOCS2A to form thiocarboxylation (-COSH) of their C-terminus. The reaction probably involves hydrogen sulfide that is generated from the persulfide intermediate and that acts as a nucleophile towards URM1 and MOCS2A. Subsequently, a transient disulfide bond is formed. Does not use thiosulfate as sulfur donor; NFS1 probably acting as a sulfur donor for thiocarboxylation reactions. This Drosophila pseudoobscura pseudoobscura (Fruit fly) protein is Adenylyltransferase and sulfurtransferase MOCS3-1.